Consider the following 236-residue polypeptide: Sperm flagellar protein 1 (236 aa).

The 106-residue stretch at 7-112 folds into the Calponin-homology (CH) domain; that stretch reads EEALHQLYLW…VLIPLRQRLE (106 aa). Positions 115-176 are disordered; that stretch reads QRRRKQGAGS…PRPPAYNRAL (62 aa). Positions 183–236 are essential for homodimerization and microtubule bundling activity; that stretch reads VLQIAEKEQELLASQETVQVLQMKVRRLEHLLQLKNVRIEDLSRRLQQAERKQR.

As to quaternary structure, homodimer. Interacts with actin, TJP1, CGN and CDH1. In terms of tissue distribution, expressed in the intestinal epithelial cells (at protein level).

The protein localises to the cytoplasm. The protein resides in the cell projection. It localises to the cilium. It is found in the flagellum. Its subcellular location is the cytoskeleton. The protein localises to the cilium axoneme. The protein resides in the apical cell membrane. It localises to the basolateral cell membrane. It is found in the stress fiber. Its subcellular location is the microvillus. The protein localises to the lamellipodium. The protein resides in the filopodium. Its function is as follows. Microtubule-associated protein involved in the stabilization of microtubules along the axis of migration during radial intercalation. Promotes the establishment and stabilization of an axis of microtubules required for the active migration of cells into the outer epithelium. Microtubule-associated protein that promotes microtubule bundling and stabilizes microtubules against depolymerization in response to cold shock. Essential for ciliary central apparatus formation which requires both its microtubule-binding and bundling activities and for ciliary localization of HYDIN and SPAG6 in ependymal cilia. Binds actin in intestinal epithelial cells (IECs), essential for IECs survival and contributes to formation of filopodia and lamellipodia in migrating IECs. Regulates planar cell polarity signaling pathway and asymmetric microtubule accumulation in ciliated epithelia. The chain is Sperm flagellar protein 1 (SPEF1) from Homo sapiens (Human).